The sequence spans 589 residues: L-fucose isomerase (589 aa).

Residues Glu340 and Asp364 each act as proton acceptor in the active site. Mn(2+) contacts are provided by Glu340, Asp364, and His527.

The protein belongs to the L-fucose isomerase family. Mn(2+) serves as cofactor.

It localises to the cytoplasm. It carries out the reaction L-fucose = L-fuculose. The protein operates within carbohydrate degradation; L-fucose degradation; L-lactaldehyde and glycerone phosphate from L-fucose: step 1/3. Its function is as follows. Converts the aldose L-fucose into the corresponding ketose L-fuculose. The chain is L-fucose isomerase from Haemophilus influenzae (strain ATCC 51907 / DSM 11121 / KW20 / Rd).